Consider the following 114-residue polypeptide: MSSAIPTSSVNPVKGMRKNGKNWHDSKKPFRPTSGLTSYEKRLEARKRQEAVKEHERELREEKEAERKAQIQKIKDRRAAKEEKERYEKMAEKMHRKRVERLKRREKRNKLLHS.

Polar residues predominate over residues 1–11 (MSSAIPTSSVN). The segment at 1 to 114 (MSSAIPTSSV…REKRNKLLHS (114 aa)) is disordered. A compositionally biased stretch (basic and acidic residues) spans 39–93 (YEKRLEARKRQEAVKEHERELREEKEAERKAQIQKIKDRRAAKEEKERYEKMAEK). Positions 40-101 (EKRLEARKRQ…EKMHRKRVER (62 aa)) form a coiled coil. Positions 94 to 114 (MHRKRVERLKRREKRNKLLHS) are enriched in basic residues.

This sequence belongs to the CGR1 family.

The protein localises to the nucleus. Its subcellular location is the nucleolus. In terms of biological role, involved in nucleolar integrity and required for processing of the pre-rRNA for the 60S ribosome subunit. The polypeptide is rRNA-processing protein cgrA (cgrA) (Aspergillus fumigatus (strain ATCC MYA-4609 / CBS 101355 / FGSC A1100 / Af293) (Neosartorya fumigata)).